Reading from the N-terminus, the 243-residue chain is UDP-2,3-diacylglucosamine hydrolase (243 aa).

5 residues coordinate Mn(2+): aspartate 9, histidine 11, aspartate 42, asparagine 79, and histidine 114. 79–80 is a binding site for substrate; sequence NR. Residues aspartate 122, serine 160, asparagine 164, and histidine 195 each contribute to the substrate site. Positions 195 and 197 each coordinate Mn(2+).

This sequence belongs to the LpxH family. It depends on Mn(2+) as a cofactor.

It is found in the cell inner membrane. The enzyme catalyses UDP-2-N,3-O-bis[(3R)-3-hydroxytetradecanoyl]-alpha-D-glucosamine + H2O = 2-N,3-O-bis[(3R)-3-hydroxytetradecanoyl]-alpha-D-glucosaminyl 1-phosphate + UMP + 2 H(+). It participates in glycolipid biosynthesis; lipid IV(A) biosynthesis; lipid IV(A) from (3R)-3-hydroxytetradecanoyl-[acyl-carrier-protein] and UDP-N-acetyl-alpha-D-glucosamine: step 4/6. Functionally, hydrolyzes the pyrophosphate bond of UDP-2,3-diacylglucosamine to yield 2,3-diacylglucosamine 1-phosphate (lipid X) and UMP by catalyzing the attack of water at the alpha-P atom. Involved in the biosynthesis of lipid A, a phosphorylated glycolipid that anchors the lipopolysaccharide to the outer membrane of the cell. The protein is UDP-2,3-diacylglucosamine hydrolase of Coxiella burnetii (strain Dugway 5J108-111).